Here is a 686-residue protein sequence, read N- to C-terminus: Methionine--tRNA ligase (686 aa).

Residues 22 to 32 (PYANGPIHLGH) carry the 'HIGH' region motif. The Zn(2+) site is built by Cys153, Cys156, Cys166, and Cys169. A 'KMSKS' region motif is present at residues 337 to 341 (KMSKS). Lys340 contributes to the ATP binding site. The tract at residues 547-573 (MLEDSKESTPAPAAAKPKKAATQKADA) is disordered. The tRNA-binding domain occupies 584–686 (DFLKVKLRVA…SGAEPGMEVR (103 aa)).

This sequence belongs to the class-I aminoacyl-tRNA synthetase family. MetG type 1 subfamily. Homodimer. Requires Zn(2+) as cofactor.

It is found in the cytoplasm. The catalysed reaction is tRNA(Met) + L-methionine + ATP = L-methionyl-tRNA(Met) + AMP + diphosphate. Is required not only for elongation of protein synthesis but also for the initiation of all mRNA translation through initiator tRNA(fMet) aminoacylation. In Alcanivorax borkumensis (strain ATCC 700651 / DSM 11573 / NCIMB 13689 / SK2), this protein is Methionine--tRNA ligase.